The primary structure comprises 188 residues: PRA1 family protein 3 (188 aa).

Residue methionine 1 is modified to N-acetylmethionine. Topologically, residues 1–35 (MDVNIAPLRAWDDFFPGSDRFARPDFRDISKWNNR) are cytoplasmic. The next 2 membrane-spanning stretches (helical) occupy residues 36–56 (VVSN…MMIS) and 57–77 (VVGF…VLVF). The Cytoplasmic segment spans residues 78–93 (TGFVWAAHNKDILRRM). The next 2 membrane-spanning stretches (helical) occupy residues 94–114 (KKQY…FLIS) and 115–135 (LFGG…LMFI). Positions 103 to 117 (MVVMLASYFLISLFG) are required for homodimer formation and heterodimer formation with ARL6IP1. At 136-188 (HASLRLRNLKNKLENKMEEIGLKRTPMGIVLDALEQQEETITKFSDYISKMKE) the chain is on the cytoplasmic side. Residues 136 to 188 (HASLRLRNLKNKLENKMEEIGLKRTPMGIVLDALEQQEETITKFSDYISKMKE) form a targeting to endoplasmic reticulum membrane region.

It belongs to the PRA1 family. In terms of assembly, homodimer. Heterodimer with ARL6IP1. Forms multimers. Interacts with ARL6. Interacts with prenylated RAB1A and RAB3A. Interacts with SLC1A1/EAAC1. Interacts with RTN2 (via first transmembrane domain). Does not interact with VAMP1, VAMP2 or VAMP3.

It localises to the endoplasmic reticulum membrane. The protein resides in the cell membrane. The protein localises to the cytoplasm. It is found in the cytoskeleton. Its function is as follows. Regulates intracellular concentrations of taurine and glutamate. Negatively modulates SLC1A1/EAAC1 glutamate transport activity by decreasing its affinity for glutamate in a PKC activity-dependent manner. Plays a role in the retention of SLC1A1/EAAC1 in the endoplasmic reticulum. The chain is PRA1 family protein 3 (ARL6IP5) from Bos taurus (Bovine).